A 500-amino-acid chain; its full sequence is V-type proton ATPase subunit B (500 aa).

Belongs to the ATPase alpha/beta chains family. In terms of assembly, V-ATPase is a heteromultimeric enzyme composed of a peripheral catalytic V1 complex (main components: subunits A, B, C, D, E, and F) attached to an integral membrane V0 proton pore complex (main component: the proteolipid protein).

Its function is as follows. Non-catalytic subunit of the peripheral V1 complex of vacuolar ATPase. V-ATPase is responsible for acidifying a variety of intracellular compartments in eukaryotic cells. The sequence is that of V-type proton ATPase subunit B from Cyanidium caldarium (Red alga).